The following is a 314-amino-acid chain: MVTYLLANFGGPRTSQEIVSFLQALLTDRDVTGGMIPSVLHRPLFSYIAKRRAPHVARQYAYLGGGSPIFQDTERLAQNLSQELQASVIPFHRYLPETHRETLQALQESQGSIVGIPLFPHYTFAVTGSIIRFFLQHLPEKPISWITQFGVHPQFVSCMQQHIRDCLAAQQIAVEDCYFLFSVHGLPQRHIRLGDPYAQQCQASFEALRGELEGEIAFQSKFGIGKWLDPSTQEVCQSLRTKKRYIVIVPFGFVSDHIETLYEIDHLYVPILLQKEYRVVRIPAINASSRWVSSLAAIVRSSPQETSLEPLLMP.

Fe cation contacts are provided by H184 and E259.

The protein belongs to the ferrochelatase family.

Its subcellular location is the cytoplasm. The enzyme catalyses heme b + 2 H(+) = protoporphyrin IX + Fe(2+). It functions in the pathway porphyrin-containing compound metabolism; protoheme biosynthesis; protoheme from protoporphyrin-IX: step 1/1. Catalyzes the ferrous insertion into protoporphyrin IX. This Chlamydia trachomatis serovar L2 (strain ATCC VR-902B / DSM 19102 / 434/Bu) protein is Ferrochelatase.